We begin with the raw amino-acid sequence, 272 residues long: Shikimate dehydrogenase (NADP(+)) (272 aa).

Residues 14 to 16 (SKS) and Thr61 each bind shikimate. Catalysis depends on Lys65, which acts as the Proton acceptor. Residue Glu77 coordinates NADP(+). Shikimate-binding residues include Asn86 and Asp102. Residues 126–130 (GAGGA), 149–154 (NRTVSR), and Met213 contribute to the NADP(+) site. Residue Tyr215 coordinates shikimate. NADP(+) is bound at residue Gly237.

This sequence belongs to the shikimate dehydrogenase family. In terms of assembly, homodimer.

It carries out the reaction shikimate + NADP(+) = 3-dehydroshikimate + NADPH + H(+). It functions in the pathway metabolic intermediate biosynthesis; chorismate biosynthesis; chorismate from D-erythrose 4-phosphate and phosphoenolpyruvate: step 4/7. In terms of biological role, involved in the biosynthesis of the chorismate, which leads to the biosynthesis of aromatic amino acids. Catalyzes the reversible NADPH linked reduction of 3-dehydroshikimate (DHSA) to yield shikimate (SA). This chain is Shikimate dehydrogenase (NADP(+)), found in Escherichia coli O45:K1 (strain S88 / ExPEC).